The sequence spans 107 residues: Ig kappa chain V-VI region NQ2-48.2.2 (107 aa).

The tract at residues 1-23 is framework-1; the sequence is QILLTQSPAIMSASPGQKVTMTC. An intrachain disulfide couples cysteine 23 to cysteine 87. The segment at 24–33 is complementarity-determining-1; sequence SASSSVSYMH. The segment at 34-48 is framework-2; it reads WYQQKSGTSPKRWIY. Residues 49 to 55 form a complementarity-determining-2 region; the sequence is DTSKLAS. Positions 56 to 87 are framework-3; the sequence is GVPARFSGSGSATSYSLTITSMQAEDAATYYC. The segment at 88–96 is complementarity-determining-3; that stretch reads QQWSSNPLT. Residues 97–106 are framework-4; the sequence is FGAGTKLXLK.

Functionally, anti-2-phenyl oxazolone (PHOX) Antibody. The protein is Ig kappa chain V-VI region NQ2-48.2.2 of Mus musculus (Mouse).